The chain runs to 320 residues: Biotin synthase (320 aa).

One can recognise a Radical SAM core domain in the interval 46–275 (NMGRRVDLCS…YAHIRYAGGR (230 aa)). Residues cysteine 64, cysteine 68, and cysteine 71 each coordinate [4Fe-4S] cluster. The [2Fe-2S] cluster site is built by serine 108, cysteine 140, cysteine 200, and arginine 270.

The protein belongs to the radical SAM superfamily. Biotin synthase family. In terms of assembly, homodimer. [4Fe-4S] cluster serves as cofactor. Requires [2Fe-2S] cluster as cofactor.

The catalysed reaction is (4R,5S)-dethiobiotin + (sulfur carrier)-SH + 2 reduced [2Fe-2S]-[ferredoxin] + 2 S-adenosyl-L-methionine = (sulfur carrier)-H + biotin + 2 5'-deoxyadenosine + 2 L-methionine + 2 oxidized [2Fe-2S]-[ferredoxin]. It functions in the pathway cofactor biosynthesis; biotin biosynthesis; biotin from 7,8-diaminononanoate: step 2/2. Its function is as follows. Catalyzes the conversion of dethiobiotin (DTB) to biotin by the insertion of a sulfur atom into dethiobiotin via a radical-based mechanism. The polypeptide is Biotin synthase (Acetivibrio thermocellus (strain ATCC 27405 / DSM 1237 / JCM 9322 / NBRC 103400 / NCIMB 10682 / NRRL B-4536 / VPI 7372) (Clostridium thermocellum)).